The primary structure comprises 698 residues: Polyphosphate kinase (698 aa).

An ATP-binding site is contributed by N63. The Mg(2+) site is built by R390 and R420. H450 functions as the Phosphohistidine intermediate in the catalytic mechanism. The ATP site is built by Y483, R579, and H607.

It belongs to the polyphosphate kinase 1 (PPK1) family. Requires Mg(2+) as cofactor. In terms of processing, an intermediate of this reaction is the autophosphorylated ppk in which a phosphate is covalently linked to a histidine residue through a N-P bond.

The enzyme catalyses [phosphate](n) + ATP = [phosphate](n+1) + ADP. Functionally, catalyzes the reversible transfer of the terminal phosphate of ATP to form a long-chain polyphosphate (polyP). The polypeptide is Polyphosphate kinase (Xylella fastidiosa (strain Temecula1 / ATCC 700964)).